A 138-amino-acid polypeptide reads, in one-letter code: Acidic phospholipase A2 beta (138 aa).

An N-terminal signal peptide occupies residues 1–16 (MRTLWIVAVLLLGVEG). 7 disulfides stabilise this stretch: Cys42–Cys131, Cys44–Cys60, Cys59–Cys111, Cys65–Cys138, Cys66–Cys104, Cys73–Cys97, and Cys91–Cys102. Residues Tyr43, Gly45, and Gly47 each contribute to the Ca(2+) site. The active site involves His63. A Ca(2+)-binding site is contributed by Asp64. Asp105 is an active-site residue.

It belongs to the phospholipase A2 family. Group II subfamily. D49 sub-subfamily. In terms of assembly, dimer. It depends on Ca(2+) as a cofactor. As to expression, expressed by the venom gland.

Its subcellular location is the secreted. The catalysed reaction is a 1,2-diacyl-sn-glycero-3-phosphocholine + H2O = a 1-acyl-sn-glycero-3-phosphocholine + a fatty acid + H(+). Its function is as follows. PLA2 catalyzes the calcium-dependent hydrolysis of the 2-acyl groups in 3-sn-phosphoglycerides. In Crotalus adamanteus (Eastern diamondback rattlesnake), this protein is Acidic phospholipase A2 beta.